The primary structure comprises 256 residues: Ribosomal RNA small subunit methyltransferase J (256 aa).

S-adenosyl-L-methionine-binding positions include R104–D105, E120–R121, S156–S157, and D174.

Belongs to the methyltransferase superfamily. RsmJ family.

The protein localises to the cytoplasm. The catalysed reaction is guanosine(1516) in 16S rRNA + S-adenosyl-L-methionine = N(2)-methylguanosine(1516) in 16S rRNA + S-adenosyl-L-homocysteine + H(+). Its function is as follows. Specifically methylates the guanosine in position 1516 of 16S rRNA. In Yersinia pseudotuberculosis serotype O:1b (strain IP 31758), this protein is Ribosomal RNA small subunit methyltransferase J.